Here is a 258-residue protein sequence, read N- to C-terminus: DNA repair protein RecO (258 aa).

This sequence belongs to the RecO family.

Its function is as follows. Involved in DNA repair and RecF pathway recombination. This Lactiplantibacillus plantarum (strain ATCC BAA-793 / NCIMB 8826 / WCFS1) (Lactobacillus plantarum) protein is DNA repair protein RecO.